The sequence spans 212 residues: FMN-dependent NAD(P)H:quinone oxidoreductase 1 (212 aa).

Residues serine 10, 16 to 18 (SQS), and 97 to 100 (MYNF) contribute to the FMN site. Substrate-binding residues include asparagine 99 and tyrosine 131. FMN contacts are provided by residues 145–148 (SRGG) and glutamate 187. Glutamate 188 is a substrate binding site.

Belongs to the azoreductase type 1 family. Homodimer. Homotetramer formed by a dimer of dimers when the ionic strength is high. Requires FMN as cofactor.

It catalyses the reaction 2 a quinone + NADPH + H(+) = 2 a 1,4-benzosemiquinone + NADP(+). It carries out the reaction 2 a quinone + NADH + H(+) = 2 a 1,4-benzosemiquinone + NAD(+). The enzyme catalyses N,N-dimethyl-1,4-phenylenediamine + anthranilate + 2 NAD(+) = 2-(4-dimethylaminophenyl)diazenylbenzoate + 2 NADH + 2 H(+). With respect to regulation, azoreductase activity increases with salt strength. Its function is as follows. Quinone reductase that provides resistance to thiol-specific stress caused by electrophilic quinones. Shows a preference for benzoquinones. Also exhibits azoreductase activity. Catalyzes the reductive cleavage of the azo bond in aromatic azo compounds to the corresponding amines. NADPH is the preferred electron donor for azoreductase activity, but it can also use NADH. Can reduce different classes of azo dyes, including the common azo dyes methyl red and p-aminoazobenzene sulfonamide (PAABSA). Can activate several azo pro-drugs used in the treatment of inflammatory bowel disease (IBD), including balsalazide, sulfasalazine and olsalazine. Also acts as a nitrodeductase, and can reduce and hence activate the nitroaromatic drug nitrofurazone, a broad spectrum antibiotic. The protein is FMN-dependent NAD(P)H:quinone oxidoreductase 1 of Pseudomonas aeruginosa (strain ATCC 15692 / DSM 22644 / CIP 104116 / JCM 14847 / LMG 12228 / 1C / PRS 101 / PAO1).